Reading from the N-terminus, the 664-residue chain is MEDKKLLIYELVEELNKLAYEYYVLDNPSVSDKDYDKKYDKLVELEKETGLVLPYSPTQRVGDVVLSKFDKYTHKGKLWSLGKAQSLKEVEDWHNKNVKAVNEYNLTHDDKLPPIKYIITKKFDGLTINCTYNEDGILVTAATRGTGEIGEEITAQAKTIKTIPLKIDNDAVIEVHGEAIMTKEAFEEYNKVAVVPLKNLRNGAAGALRNLNVKETARRNLSAFFYDIGYNEGTPFKTYGEMLKFIKDHGIPMDDYAMECSTIEEIEKEINYIEEIRNKLNYDIDGAVIAVDDMKTRELLGYTVKFPKWALAYKFEAQEATTKLLEVEWNVGRSGRVTPTAILEPVEIGGVTVKRATLNNMDDIERKGVKLGSTVFLRRSNDVIPEIMGVVEESLEGSKDIEAPTTCPYCGSEIVQEGVHYFCENTLSCKPQLVKSIVHFGSREAMNIAGFSEKTAEQLFEELEIKSISDLYRIKKEDLLKLNRFGEKKAQNLIDAIESSKECDLPSFIYALGIPNVGKKTSTDLCKKFKTLDNLKKAKFEELVSVEDIGDIVAQSVLDFFNDETILKSIDELLSLGVTPKFKEEEIKENIFNGKTVVVTGSLSSFSRNEIKEKLQSLGAKVAGSVSKKTDYVLVGKDPGSKYEKALQLNIKIISEEDFKNMIG.

Residues 32-36 (DKDYD) and 80-81 (SL) contribute to the NAD(+) site. Catalysis depends on K122, which acts as the N6-AMP-lysine intermediate. R144, E178, and K314 together coordinate NAD(+). The Zn(2+) site is built by C407, C410, C423, and C429. The BRCT domain occupies 587–664 (IKENIFNGKT…SEEDFKNMIG (78 aa)).

It belongs to the NAD-dependent DNA ligase family. LigA subfamily. The cofactor is Mg(2+). It depends on Mn(2+) as a cofactor.

It catalyses the reaction NAD(+) + (deoxyribonucleotide)n-3'-hydroxyl + 5'-phospho-(deoxyribonucleotide)m = (deoxyribonucleotide)n+m + AMP + beta-nicotinamide D-nucleotide.. In terms of biological role, DNA ligase that catalyzes the formation of phosphodiester linkages between 5'-phosphoryl and 3'-hydroxyl groups in double-stranded DNA using NAD as a coenzyme and as the energy source for the reaction. It is essential for DNA replication and repair of damaged DNA. This Clostridium novyi (strain NT) protein is DNA ligase.